A 373-amino-acid chain; its full sequence is Queuine tRNA-ribosyltransferase (373 aa).

Asp-93 serves as the catalytic Proton acceptor. Substrate-binding positions include 93-97 (DSGGF), Asp-147, Gln-191, and Gly-218. An RNA binding region spans residues 249 to 255 (GVGAPRD). The active-site Nucleophile is Asp-268. An RNA binding; important for wobble base 34 recognition region spans residues 273–277 (TRNAR). Zn(2+) contacts are provided by Cys-306, Cys-308, Cys-311, and His-337.

Belongs to the queuine tRNA-ribosyltransferase family. Homodimer. Within each dimer, one monomer is responsible for RNA recognition and catalysis, while the other monomer binds to the replacement base PreQ1. The cofactor is Zn(2+).

It carries out the reaction 7-aminomethyl-7-carbaguanine + guanosine(34) in tRNA = 7-aminomethyl-7-carbaguanosine(34) in tRNA + guanine. The protein operates within tRNA modification; tRNA-queuosine biosynthesis. Catalyzes the base-exchange of a guanine (G) residue with the queuine precursor 7-aminomethyl-7-deazaguanine (PreQ1) at position 34 (anticodon wobble position) in tRNAs with GU(N) anticodons (tRNA-Asp, -Asn, -His and -Tyr). Catalysis occurs through a double-displacement mechanism. The nucleophile active site attacks the C1' of nucleotide 34 to detach the guanine base from the RNA, forming a covalent enzyme-RNA intermediate. The proton acceptor active site deprotonates the incoming PreQ1, allowing a nucleophilic attack on the C1' of the ribose to form the product. After dissociation, two additional enzymatic reactions on the tRNA convert PreQ1 to queuine (Q), resulting in the hypermodified nucleoside queuosine (7-(((4,5-cis-dihydroxy-2-cyclopenten-1-yl)amino)methyl)-7-deazaguanosine). This Solidesulfovibrio magneticus (strain ATCC 700980 / DSM 13731 / RS-1) (Desulfovibrio magneticus) protein is Queuine tRNA-ribosyltransferase.